The sequence spans 322 residues: Hapalindole dimethylallyltransferase (322 aa).

Positions 46, 60, 115, 166, 168, 221, 225, and 275 each coordinate dimethylallyl diphosphate.

This sequence belongs to the aromatic prenyltransferase family.

It catalyses the reaction hapalindole G + dimethylallyl diphosphate = ambiguine A + diphosphate. It carries out the reaction hapalindole U + dimethylallyl diphosphate + H(+) = ambiguine H + diphosphate. With respect to regulation, activity is slightly increased in the presence of Mg(2+). Its function is as follows. Prenyltransferase involved in the biosynthesis of ambiguines, a family of hapalindole-type alkaloids. Catalyzes the reverse prenylation of hapalindole G or U at the C2 position with dimethylallyl diphosphate (DMAPP) to generate ambiguine A or H, respectively. In addition, accepts hapalindole A, an epimer of hapalindole G, and catalyzes normal prenylation at its C2 position. The chain is Hapalindole dimethylallyltransferase from Fischerella ambigua (strain UTEX 1903).